A 350-amino-acid polypeptide reads, in one-letter code: MAFKIASSPHVSTTLHTNTVMKRVALCLIPGIAVQSYYFGYGTLVQLLLAITVAYLAEAAVMKLRNRNITATLTDNSALVTASLLAVAIPPLAPWWLIVIGTLFAIVIVKQLYGGLGNNVFNPAMAAYVLLLISFPVQMTSWVAPQTLTVNYADMLHTFNSIFQLNAGYAADFFHLAIDGTTMATPLDTLKTDLSMGLTTTESMTKTIFSGSVGEGWFWVNMAYLVGGLVMLKLKVIRWHISGAIVLTLFVCASIGFLISPDTFVSPIMHLFSGGTMLAAFFIATDPVTAATSPRGRLIFGAMIGLLIYLIRTFGGYPDAVAFAVLLANMCAPFIDYYVRPRSYGHRVGN.

Transmembrane regions (helical) follow at residues 37 to 57 (YYFG…AYLA), 78 to 109 (ALVT…IVIV), 124 to 144 (AMAA…SWVA), and 158 to 178 (TFNS…HLAI). Threonine 185 carries the FMN phosphoryl threonine modification. Transmembrane regions (helical) follow at residues 212-232 (SVGE…LVML), 239-259 (WHIS…GFLI), 264-284 (FVSP…FFIA), 298-318 (LIFG…GGYP), and 319-339 (DAVA…DYYV).

The protein belongs to the NqrB/RnfD family. As to quaternary structure, the complex is composed of six subunits: RnfA, RnfB, RnfC, RnfD, RnfE and RnfG. The cofactor is FMN.

Its subcellular location is the cell inner membrane. Its function is as follows. Part of a membrane-bound complex that couples electron transfer with translocation of ions across the membrane. This chain is Ion-translocating oxidoreductase complex subunit D, found in Shewanella frigidimarina (strain NCIMB 400).